The following is a 62-amino-acid chain: Sperm protamine P1 (62 aa).

The segment at 1–62 (MARYRHSRSR…RYSRRRRRRY (62 aa)) is disordered.

This sequence belongs to the protamine P1 family. In terms of tissue distribution, testis.

It localises to the nucleus. It is found in the chromosome. Protamines substitute for histones in the chromatin of sperm during the haploid phase of spermatogenesis. They compact sperm DNA into a highly condensed, stable and inactive complex. This chain is Sperm protamine P1 (PRM1), found in Dorcopsulus vanheurni (Lesser forest wallaby).